Reading from the N-terminus, the 182-residue chain is Adenine phosphoribosyltransferase (182 aa).

Belongs to the purine/pyrimidine phosphoribosyltransferase family. As to quaternary structure, homodimer.

It localises to the cytoplasm. It catalyses the reaction AMP + diphosphate = 5-phospho-alpha-D-ribose 1-diphosphate + adenine. The protein operates within purine metabolism; AMP biosynthesis via salvage pathway; AMP from adenine: step 1/1. Its function is as follows. Catalyzes a salvage reaction resulting in the formation of AMP, that is energically less costly than de novo synthesis. The sequence is that of Adenine phosphoribosyltransferase from Wolinella succinogenes (strain ATCC 29543 / DSM 1740 / CCUG 13145 / JCM 31913 / LMG 7466 / NCTC 11488 / FDC 602W) (Vibrio succinogenes).